The primary structure comprises 146 residues: Large ribosomal subunit protein bL21 (146 aa).

Basic residues predominate over residues 95-104; sequence PKKKTRRKMG. Residues 95 to 146 are disordered; sequence PKKKTRRKMGHRQELTRVMVKSISISKSTPKSSPKTEATKKSTSSKASKPEN. Over residues 115–146 the composition is skewed to low complexity; sequence KSISISKSTPKSSPKTEATKKSTSSKASKPEN.

It belongs to the bacterial ribosomal protein bL21 family. As to quaternary structure, part of the 50S ribosomal subunit. Contacts protein L20.

Functionally, this protein binds to 23S rRNA in the presence of protein L20. This is Large ribosomal subunit protein bL21 from Prochlorococcus marinus (strain MIT 9515).